The chain runs to 193 residues: Imidazoleglycerol-phosphate dehydratase (193 aa).

This sequence belongs to the imidazoleglycerol-phosphate dehydratase family.

The protein resides in the cytoplasm. It carries out the reaction D-erythro-1-(imidazol-4-yl)glycerol 3-phosphate = 3-(imidazol-4-yl)-2-oxopropyl phosphate + H2O. The protein operates within amino-acid biosynthesis; L-histidine biosynthesis; L-histidine from 5-phospho-alpha-D-ribose 1-diphosphate: step 6/9. This Saccharolobus islandicus (strain M.14.25 / Kamchatka #1) (Sulfolobus islandicus) protein is Imidazoleglycerol-phosphate dehydratase.